A 616-amino-acid chain; its full sequence is Vitamin B12 transporter BtuB (616 aa).

A signal peptide spans Met-1–Ala-20. Residues Asp-26–Asn-33 carry the TonB box motif. Positions Pro-38–Thr-152 constitute a TBDR plug domain. Cyanocob(III)alamin-binding positions include Leu-83, Ser-85, Asn-92, and Val-110 to Thr-111. The region spanning Lys-155 to Phe-616 is the TBDR beta-barrel domain. 3 beta stranded membrane passes run Thr-158 to Gly-165, Tyr-169 to Gln-178, and Thr-184 to Thr-195. Asp-199, Gln-211, Asp-213, and Asp-215 together coordinate Ca(2+). 2 beta stranded membrane-spanning segments follow: residues Phe-217–Glu-227 and Asp-232–Ala-248. The Ca(2+) site is built by Tyr-249, Asp-250, and Asp-263. The next 17 membrane-spanning stretches (beta stranded) occupy residues Arg-265–Asn-279, Asp-281–Asn-298, Thr-311–Asp-327, His-330–Trp-339, Tyr-355–Gly-371, Val-373–Asp-383, Phe-387–Ile-402, Tyr-405–Asn-419, Glu-436–Glu-445, Val-451–Asn-460, Tyr-475–Phe-492, Pro-496–Ala-511, Arg-519–Thr-531, Asp-537–Asp-552, Asn-560–Ser-574, Ile-587–Ala-598, and Ala-604–Phe-616. Thr-311 contributes to the cyanocob(III)alamin binding site. Arg-519 is a cyanocob(III)alamin binding site. Residues Tyr-599–Phe-616 carry the TonB C-terminal box motif.

It belongs to the TonB-dependent receptor family. BtuB (TC 1.B.14.3.1) subfamily.

It is found in the cell outer membrane. Its function is as follows. Involved in the active translocation of vitamin B12 (cyanocobalamin) across the outer membrane to the periplasmic space. It derives its energy for transport by interacting with the trans-periplasmic membrane protein TonB. This Cronobacter sakazakii (strain ATCC BAA-894) (Enterobacter sakazakii) protein is Vitamin B12 transporter BtuB.